The following is a 394-amino-acid chain: Elongation factor Tu (394 aa).

The region spanning 10–204 (KEHANIGTIG…AVDDYIPTPE (195 aa)) is the tr-type G domain. Residues 19 to 26 (GHVDHGKT) are G1. 19–26 (GHVDHGKT) contributes to the GTP binding site. Threonine 26 contributes to the Mg(2+) binding site. The G2 stretch occupies residues 60 to 64 (GITIN). Residues 81–84 (DCPG) form a G3 region. Residues 81–85 (DCPGH) and 136–139 (NKVD) each bind GTP. A G4 region spans residues 136 to 139 (NKVD). Positions 174–176 (SAL) are G5.

The protein belongs to the TRAFAC class translation factor GTPase superfamily. Classic translation factor GTPase family. EF-Tu/EF-1A subfamily. As to quaternary structure, monomer.

It localises to the cytoplasm. It carries out the reaction GTP + H2O = GDP + phosphate + H(+). Functionally, GTP hydrolase that promotes the GTP-dependent binding of aminoacyl-tRNA to the A-site of ribosomes during protein biosynthesis. The sequence is that of Elongation factor Tu from Staphylococcus epidermidis (strain ATCC 35984 / DSM 28319 / BCRC 17069 / CCUG 31568 / BM 3577 / RP62A).